Here is a 247-residue protein sequence, read N- to C-terminus: Probable transcriptional regulatory protein DVU_2259 (247 aa).

Residues 1–22 (MAGHSKWANIQHRKGRQDAKRG) are disordered.

It belongs to the TACO1 family.

The protein resides in the cytoplasm. The sequence is that of Probable transcriptional regulatory protein DVU_2259 from Nitratidesulfovibrio vulgaris (strain ATCC 29579 / DSM 644 / CCUG 34227 / NCIMB 8303 / VKM B-1760 / Hildenborough) (Desulfovibrio vulgaris).